The primary structure comprises 435 residues: tRNA-2-methylthio-N(6)-dimethylallyladenosine synthase (435 aa).

The MTTase N-terminal domain occupies 1-117 (MKYFIKTYGC…MPKLLEDVKV (117 aa)). [4Fe-4S] cluster is bound by residues Cys10, Cys46, Cys80, Cys156, Cys160, and Cys163. The Radical SAM core domain occupies 142 to 370 (RDNSYCAYVT…LEIQKAITSK (229 aa)). Positions 373–433 (QRYKNTVQKV…FQSLDGVVQN (61 aa)) constitute a TRAM domain.

The protein belongs to the methylthiotransferase family. MiaB subfamily. As to quaternary structure, monomer. Requires [4Fe-4S] cluster as cofactor.

It localises to the cytoplasm. It catalyses the reaction N(6)-dimethylallyladenosine(37) in tRNA + (sulfur carrier)-SH + AH2 + 2 S-adenosyl-L-methionine = 2-methylsulfanyl-N(6)-dimethylallyladenosine(37) in tRNA + (sulfur carrier)-H + 5'-deoxyadenosine + L-methionine + A + S-adenosyl-L-homocysteine + 2 H(+). Its function is as follows. Catalyzes the methylthiolation of N6-(dimethylallyl)adenosine (i(6)A), leading to the formation of 2-methylthio-N6-(dimethylallyl)adenosine (ms(2)i(6)A) at position 37 in tRNAs that read codons beginning with uridine. This chain is tRNA-2-methylthio-N(6)-dimethylallyladenosine synthase, found in Hydrogenobaculum sp. (strain Y04AAS1).